Consider the following 833-residue polypeptide: Leucine--tRNA ligase (833 aa).

The 'HIGH' region signature appears at 41–52 (PYPSGAGLHVGH). Residues 610–614 (KMSKS) carry the 'KMSKS' region motif. Lys613 lines the ATP pocket.

This sequence belongs to the class-I aminoacyl-tRNA synthetase family.

It is found in the cytoplasm. It catalyses the reaction tRNA(Leu) + L-leucine + ATP = L-leucyl-tRNA(Leu) + AMP + diphosphate. The protein is Leucine--tRNA ligase of Streptococcus pneumoniae (strain ATCC 700669 / Spain 23F-1).